The chain runs to 140 residues: uncharacterized protein (140 aa).

This is an uncharacterized protein from Sinorhizobium fredii (strain NBRC 101917 / NGR234).